Reading from the N-terminus, the 101-residue chain is Large ribosomal subunit protein uL23 (101 aa).

The protein belongs to the universal ribosomal protein uL23 family. In terms of assembly, part of the 50S ribosomal subunit. Contacts protein L29, and trigger factor when it is bound to the ribosome.

One of the early assembly proteins it binds 23S rRNA. One of the proteins that surrounds the polypeptide exit tunnel on the outside of the ribosome. Forms the main docking site for trigger factor binding to the ribosome. The polypeptide is Large ribosomal subunit protein uL23 (Corynebacterium jeikeium (strain K411)).